The primary structure comprises 109 residues: Nucleoid-associated protein APL_0075 (109 aa).

The disordered stretch occupies residues 1–21 (MFGKGGLGGLMKQAQQMQERM). Low complexity predominate over residues 10–19 (LMKQAQQMQE).

The protein belongs to the YbaB/EbfC family. As to quaternary structure, homodimer.

The protein localises to the cytoplasm. The protein resides in the nucleoid. Binds to DNA and alters its conformation. May be involved in regulation of gene expression, nucleoid organization and DNA protection. The protein is Nucleoid-associated protein APL_0075 of Actinobacillus pleuropneumoniae serotype 5b (strain L20).